The primary structure comprises 397 residues: Glycine betaine/carnitine transport ATP-binding protein GbuA (397 aa).

An ABC transporter domain is found at 28-264; that stretch reads KSKTDILKET…PANEYVEKFI (237 aa). 60–67 is a binding site for ATP; sequence GLSGSGKS. CBS domains lie at 279 to 335 and 340 to 395; these read MIRP…NITS and LHRD…EVNV.

Belongs to the ABC transporter superfamily. The complex is composed of two ATP-binding proteins (GbuA), two transmembrane proteins (GbuB) and a solute-binding protein (GbuC).

It carries out the reaction a quaternary ammonium(out) + ATP + H2O = a quaternary ammonium(in) + ADP + phosphate + H(+). The complex is activated by an osmotic gradient or by low temperature. Functionally, part of the ABC transporter complex GbuABC involved in glycine betaine uptake. Responsible for energy coupling to the transport system. Involved, with BetL and OpuC, in osmoprotection and cryoprotection of Listeria. Can also uptake carnitine when carnitine is abundant in the growth medium. The sequence is that of Glycine betaine/carnitine transport ATP-binding protein GbuA (gbuA) from Listeria monocytogenes serotype 1/2a (strain 10403S).